A 192-amino-acid polypeptide reads, in one-letter code: MITISENAQQHFIKLLSQQAEGTHIRVFVVNPGTAKAECGVSYCPPDAVEADDIQLPFEGFSAMVDADSKGFLEDAEIDFTTDQMGSQLTLKAPNAKLRKVADDAPLFERVHYFLQAEVNPQLAGHGGECTLVEITDDGYAVLQFGGGCNGCAQIDVTVKDGIEKQLIELMAGEIKGVKDATEHERGDHSYY.

2 residues coordinate [4Fe-4S] cluster: C149 and C152.

This sequence belongs to the NfuA family. Homodimer. Requires [4Fe-4S] cluster as cofactor.

Involved in iron-sulfur cluster biogenesis. Binds a 4Fe-4S cluster, can transfer this cluster to apoproteins, and thereby intervenes in the maturation of Fe/S proteins. Could also act as a scaffold/chaperone for damaged Fe/S proteins. The polypeptide is Fe/S biogenesis protein NfuA (Colwellia psychrerythraea (strain 34H / ATCC BAA-681) (Vibrio psychroerythus)).